The following is a 537-amino-acid chain: Bifunctional purine biosynthesis protein PurH (537 aa).

Residues 8 to 158 form the MGS-like domain; that stretch reads IPAPDLVPVR…KNHAYVAVVT (151 aa).

It belongs to the PurH family.

It catalyses the reaction (6R)-10-formyltetrahydrofolate + 5-amino-1-(5-phospho-beta-D-ribosyl)imidazole-4-carboxamide = 5-formamido-1-(5-phospho-D-ribosyl)imidazole-4-carboxamide + (6S)-5,6,7,8-tetrahydrofolate. The catalysed reaction is IMP + H2O = 5-formamido-1-(5-phospho-D-ribosyl)imidazole-4-carboxamide. It participates in purine metabolism; IMP biosynthesis via de novo pathway; 5-formamido-1-(5-phospho-D-ribosyl)imidazole-4-carboxamide from 5-amino-1-(5-phospho-D-ribosyl)imidazole-4-carboxamide (10-formyl THF route): step 1/1. Its pathway is purine metabolism; IMP biosynthesis via de novo pathway; IMP from 5-formamido-1-(5-phospho-D-ribosyl)imidazole-4-carboxamide: step 1/1. The protein is Bifunctional purine biosynthesis protein PurH of Chelativorans sp. (strain BNC1).